A 194-amino-acid chain; its full sequence is ATP-dependent Clp protease proteolytic subunit (194 aa).

The active-site Nucleophile is Ser98. The active site involves His123.

Belongs to the peptidase S14 family. In terms of assembly, fourteen ClpP subunits assemble into 2 heptameric rings which stack back to back to give a disk-like structure with a central cavity, resembling the structure of eukaryotic proteasomes.

It localises to the cytoplasm. The catalysed reaction is Hydrolysis of proteins to small peptides in the presence of ATP and magnesium. alpha-casein is the usual test substrate. In the absence of ATP, only oligopeptides shorter than five residues are hydrolyzed (such as succinyl-Leu-Tyr-|-NHMec, and Leu-Tyr-Leu-|-Tyr-Trp, in which cleavage of the -Tyr-|-Leu- and -Tyr-|-Trp bonds also occurs).. Functionally, cleaves peptides in various proteins in a process that requires ATP hydrolysis. Has a chymotrypsin-like activity. Plays a major role in the degradation of misfolded proteins. The polypeptide is ATP-dependent Clp protease proteolytic subunit (Ruminiclostridium cellulolyticum (strain ATCC 35319 / DSM 5812 / JCM 6584 / H10) (Clostridium cellulolyticum)).